Reading from the N-terminus, the 392-residue chain is Phospho-N-acetylmuramoyl-pentapeptide-transferase (392 aa).

Transmembrane regions (helical) follow at residues 24–44 (YLTM…LLAG), 76–96 (TMGG…WFDL), 100–120 (FVWI…VDDW), 137–157 (YFWQ…CISE), 170–190 (WVQS…VPFF), 193–213 (VSYP…IVGA), 225–245 (GLAI…AYVT), 262–282 (SGEL…FLWF), 289–309 (VFMG…IAVI), 314–334 (IVLA…MLQV), and 369–389 (QVVI…LSTL).

This sequence belongs to the glycosyltransferase 4 family. MraY subfamily. The cofactor is Mg(2+).

It localises to the cell inner membrane. The enzyme catalyses UDP-N-acetyl-alpha-D-muramoyl-L-alanyl-gamma-D-glutamyl-meso-2,6-diaminopimeloyl-D-alanyl-D-alanine + di-trans,octa-cis-undecaprenyl phosphate = di-trans,octa-cis-undecaprenyl diphospho-N-acetyl-alpha-D-muramoyl-L-alanyl-D-glutamyl-meso-2,6-diaminopimeloyl-D-alanyl-D-alanine + UMP. Its pathway is cell wall biogenesis; peptidoglycan biosynthesis. Functionally, catalyzes the initial step of the lipid cycle reactions in the biosynthesis of the cell wall peptidoglycan: transfers peptidoglycan precursor phospho-MurNAc-pentapeptide from UDP-MurNAc-pentapeptide onto the lipid carrier undecaprenyl phosphate, yielding undecaprenyl-pyrophosphoryl-MurNAc-pentapeptide, known as lipid I. This is Phospho-N-acetylmuramoyl-pentapeptide-transferase from Delftia acidovorans (strain DSM 14801 / SPH-1).